Reading from the N-terminus, the 2498-residue chain is PKS-NRPS hybrid synthetase acdB (2498 aa).

An adenylation (A) domain region spans residues 34-427 (FEQAAHAHFD…GRADSQVKIR (394 aa)). The Carrier 1 domain maps to 531-606 (QPATELERDI…SLAGYLMDMD (76 aa)). Ser566 is modified (O-(pantetheine 4'-phosphoryl)serine). In terms of domain architecture, Ketosynthase family 3 (KS3) spans 627 to 1058 (SDDIAVVSMA…GTNAHVIVEE (432 aa)). Catalysis depends on for beta-ketoacyl synthase activity residues Cys802, His938, and His979. The malonyl-CoA:ACP transacylase (MAT) domain stretch occupies residues 1165-1485 (LFAGQGSQQL…EILARLHVQH (321 aa)). Positions 1739-1917 (GAVLITGGLS…PAVCVAYGPL (179 aa)) are ketoreductase (KR) domain. The 76-residue stretch at 2017-2092 (EILLRTIQEA…ELSRYLLPQL (76 aa)) folds into the Carrier 2 domain. Ser2052 bears the O-(pantetheine 4'-phosphoryl)serine mark. The thioester reductase (TE) domain stretch occupies residues 2149–2378 (VTGATEFVGA…FPVDYVCRTI (230 aa)).

This sequence in the C-terminal section; belongs to the NRP synthetase family. It depends on pantetheine 4'-phosphate as a cofactor.

It participates in secondary metabolite biosynthesis. Functionally, PKS-NRPS hybrid synthetase; part of the gene cluster that mediates the biosynthesis of aspcandine, a pyrrolobenzazepine alkaloid. Initially, the indoleamine 2,3-dioxygenase acdA accepts L-tryptophan and performs the oxidative opening of the indole ring to yield N'-formyl-L-kynurenine, which undergoes the spontaneous deformylation reaction to provide L-kynurenine. The kynurenine 3-monooxygenase acdD then hydroxylates L-kynurenine to afford 3-hydroxy-L-kynurenine. 3-hydroxy-L-kynurenine is activated by the A domain of the NRPS-PKS acdB and subsequently loaded onto the enzyme. The KS domain conducts the decarboxylative condensation of the 3-hydroxy-L-kynurenyl and malonyl moieties, and subsequent nucleophilic attacks by the two amino groups would occur nonenzymatically at two distinct positions, achieving the chain release and the construction of the tricyclic system. Finally, a dehydration reaction completes the biosynthesis to yield aspcandine. The sequence is that of PKS-NRPS hybrid synthetase acdB from Aspergillus candidus.